Reading from the N-terminus, the 194-residue chain is MKCPFCGHADDRVLDTRVQKDGSIRRRRECLECKARFSTVETIMLAFPFIIKKDGRREPFSKEKILKGLQASCQKRPVSLAQIDAVVEKISAWVINRGESEISSRLIGKKVMAELKQLDDVAYIRFASVYRTFKDVQEFVETLEDAELLDFVDASNPQLSLTAMTFVESEKSTNHETDSKTPSPRTRPPGPLSN.

Residues 3–33 (CPFCGHADDRVLDTRVQKDGSIRRRRECLEC) fold into a zinc finger. The ATP-cone domain occupies 48-138 (PFIIKKDGRR…VYRTFKDVQE (91 aa)). The segment covering 168–179 (ESEKSTNHETDS) has biased composition (basic and acidic residues). A disordered region spans residues 168-194 (ESEKSTNHETDSKTPSPRTRPPGPLSN). Over residues 185–194 (RTRPPGPLSN) the composition is skewed to pro residues.

It belongs to the NrdR family. The cofactor is Zn(2+).

In terms of biological role, negatively regulates transcription of bacterial ribonucleotide reductase nrd genes and operons by binding to NrdR-boxes. The polypeptide is Transcriptional repressor NrdR (Bdellovibrio bacteriovorus (strain ATCC 15356 / DSM 50701 / NCIMB 9529 / HD100)).